A 405-amino-acid chain; its full sequence is Multifunctional CCA protein (405 aa).

2 residues coordinate ATP: G8 and R11. G8 and R11 together coordinate CTP. D21 and D23 together coordinate Mg(2+). The ATP site is built by R91, R137, and R140. CTP-binding residues include R91, R137, and R140. The HD domain occupies 225 to 326; it reads TGVHAMLVLD…LRLLRECDAL (102 aa).

Belongs to the tRNA nucleotidyltransferase/poly(A) polymerase family. Bacterial CCA-adding enzyme type 1 subfamily. In terms of assembly, monomer. Can also form homodimers and oligomers. Requires Mg(2+) as cofactor. Ni(2+) is required as a cofactor.

The catalysed reaction is a tRNA precursor + 2 CTP + ATP = a tRNA with a 3' CCA end + 3 diphosphate. The enzyme catalyses a tRNA with a 3' CCA end + 2 CTP + ATP = a tRNA with a 3' CCACCA end + 3 diphosphate. Functionally, catalyzes the addition and repair of the essential 3'-terminal CCA sequence in tRNAs without using a nucleic acid template. Adds these three nucleotides in the order of C, C, and A to the tRNA nucleotide-73, using CTP and ATP as substrates and producing inorganic pyrophosphate. tRNA 3'-terminal CCA addition is required both for tRNA processing and repair. Also involved in tRNA surveillance by mediating tandem CCA addition to generate a CCACCA at the 3' terminus of unstable tRNAs. While stable tRNAs receive only 3'-terminal CCA, unstable tRNAs are marked with CCACCA and rapidly degraded. This Laribacter hongkongensis (strain HLHK9) protein is Multifunctional CCA protein.